Reading from the N-terminus, the 633-residue chain is Leucine-rich repeat and IQ domain-containing protein 3 (633 aa).

LRR repeat units follow at residues 51-72, 73-94, and 98-119; these read SLRV…QSCK, KLIK…NFWS, and NLKL…CVLS. One can recognise an LRRCT domain in the interval 132–179; the sequence is CPVSLKKGYRHVLVNSIWPLKALDHHVISDEEIIQNWRLPERFKTFSP. Residues 215 to 244 form the IQ domain; that stretch reads HNSPVLIIQRWIRGFIVRKHLSPYFKHKKH. Positions 324–343 are disordered; sequence SKQPRHHIHKGQKAMKAESE. Positions 325–336 are enriched in basic residues; sequence KQPRHHIHKGQK. A coiled-coil region spans residues 556–617; it reads IEKWEEQKYK…AKVEYIKTFY (62 aa).

The polypeptide is Leucine-rich repeat and IQ domain-containing protein 3 (Lrriq3) (Mus musculus (Mouse)).